The following is a 259-amino-acid chain: UPF0246 protein PP_1289 (259 aa).

This sequence belongs to the UPF0246 family.

The polypeptide is UPF0246 protein PP_1289 (Pseudomonas putida (strain ATCC 47054 / DSM 6125 / CFBP 8728 / NCIMB 11950 / KT2440)).